Consider the following 346-residue polypeptide: Phosphoribosylformylglycinamidine cyclo-ligase (346 aa).

It belongs to the AIR synthase family.

It localises to the cytoplasm. It carries out the reaction 2-formamido-N(1)-(5-O-phospho-beta-D-ribosyl)acetamidine + ATP = 5-amino-1-(5-phospho-beta-D-ribosyl)imidazole + ADP + phosphate + H(+). It participates in purine metabolism; IMP biosynthesis via de novo pathway; 5-amino-1-(5-phospho-D-ribosyl)imidazole from N(2)-formyl-N(1)-(5-phospho-D-ribosyl)glycinamide: step 2/2. The polypeptide is Phosphoribosylformylglycinamidine cyclo-ligase (Geobacillus sp. (strain WCH70)).